The sequence spans 1393 residues: ABC transporter G family member 3 (1393 aa).

The span at 1 to 14 (MEDKNNIELQEKAP) shows a compositional bias: basic and acidic residues. Positions 1-68 (MEDKNNIELQ…IIYQNPTPAS (68 aa)) are disordered. Over residues 15–50 (DNYNNNNNNNNNNNNNNNNNNNNNNNNNNNNNNDIN) the composition is skewed to low complexity. One can recognise an ABC transporter 1 domain in the interval 100 to 353 (VSANNISYYI…YFSSIGLAPL (254 aa)). An ATP-binding site is contributed by 144–151 (GIPGAGKS). The region spanning 473–698 (MQYAVRFFQA…SYADGGYQGN (226 aa)) is the ABC transmembrane type-2 1 domain. The next 7 helical transmembrane spans lie at 479 to 499 (FFQAIFMGCVIGSLFVKMGFT), 509 to 529 (LVYFAMVLHIWTTIGSVEEFF), 558 to 578 (IPISLIEAILFSSCCYWIAGF), 585 to 605 (FIVFILGMALTNLIAQGIFQV), 615 to 635 (LASLICPAIVVLFMIMSGYMI), 640 to 660 (IPGWWIWLNALSPLRYVIDMV), and 724 to 744 (VDIVIILGFVCTFFFIFFLGV). An ABC transporter 2 domain is found at 783–1035 (MTFQNLNYVV…VIQHFTSAGY (253 aa)). 828–835 (GPSGAGKS) provides a ligand contact to ATP. The ABC transmembrane type-2 2 domain occupies 1121–1388 (QTILLRFLRS…FLGYLALRFI (268 aa)). The next 6 helical transmembrane spans lie at 1122 to 1142 (TILLRFLRSFIPAIVIGTLFL), 1157 to 1177 (LVFLGFLFGGMASIGKVPTIV), 1206 to 1226 (LPMMVLTAFSYWIPMFFLTGL), 1235 to 1255 (FFFSLSVYLLVIMCYDSLATL), 1265 to 1285 (IAILVSGVGLNFLGLFGGFFI), and 1364 to 1384 (FYNLIILGGYFCAYTFLGYLA).

This sequence belongs to the ABC transporter superfamily. ABCG family. PDR (TC 3.A.1.205) subfamily.

Its subcellular location is the membrane. The protein is ABC transporter G family member 3 (abcG3) of Dictyostelium discoideum (Social amoeba).